The primary structure comprises 951 residues: Valine--tRNA ligase (951 aa).

The short motif at proline 42 to histidine 52 is the 'HIGH' region element. The 'KMSKS' region motif lies at lysine 554–serine 558. Position 557 (lysine 557) interacts with ATP. Residues alanine 880–glutamine 944 are a coiled coil.

This sequence belongs to the class-I aminoacyl-tRNA synthetase family. ValS type 1 subfamily. Monomer.

The protein resides in the cytoplasm. It catalyses the reaction tRNA(Val) + L-valine + ATP = L-valyl-tRNA(Val) + AMP + diphosphate. In terms of biological role, catalyzes the attachment of valine to tRNA(Val). As ValRS can inadvertently accommodate and process structurally similar amino acids such as threonine, to avoid such errors, it has a 'posttransfer' editing activity that hydrolyzes mischarged Thr-tRNA(Val) in a tRNA-dependent manner. In Shigella flexneri, this protein is Valine--tRNA ligase.